The sequence spans 202 residues: Pyridoxal 5'-phosphate synthase subunit PdxT (202 aa).

Residue 49–51 (GES) coordinates L-glutamine. Cysteine 81 acts as the Nucleophile in catalysis. Residues arginine 110 and 139 to 140 (IR) contribute to the L-glutamine site. Active-site charge relay system residues include histidine 182 and glutamate 184.

This sequence belongs to the glutaminase PdxT/SNO family. As to quaternary structure, in the presence of PdxS, forms a dodecamer of heterodimers. Only shows activity in the heterodimer.

The enzyme catalyses aldehydo-D-ribose 5-phosphate + D-glyceraldehyde 3-phosphate + L-glutamine = pyridoxal 5'-phosphate + L-glutamate + phosphate + 3 H2O + H(+). The catalysed reaction is L-glutamine + H2O = L-glutamate + NH4(+). It participates in cofactor biosynthesis; pyridoxal 5'-phosphate biosynthesis. In terms of biological role, catalyzes the hydrolysis of glutamine to glutamate and ammonia as part of the biosynthesis of pyridoxal 5'-phosphate. The resulting ammonia molecule is channeled to the active site of PdxS. The protein is Pyridoxal 5'-phosphate synthase subunit PdxT of Rhodococcus jostii (strain RHA1).